Reading from the N-terminus, the 330-residue chain is MKKQYIEKQQQISFVKSFFSSQLEQLLGLIEVQAPILSRIGDGTQDNLSGTEKAVQVKVKALPDATFEVVHSLAKWKRKTLGAYDFSSGEGIYTHMKALRPDEDRLSPIHSVYVDQWDWERVMGDGERHAEYLKSTVTRIYQGIKATEAAVHQAFGIQPFLPEQIHFVHTETLLKRYPELDAKGRERAIAKELGAVFLIGIGGKLSSGQSHDVRAPDYDDWTTPGEQELAGLNGDIVVWNPVLNDAFEISSMGIRVDAEALTRQLALTQDEERLKLEWHQALLRGEMPQTIGGGIGQSRLVMLLLQLSHIGQVQCGVWPQPLRESVSGLL.

The protein belongs to the class-II aminoacyl-tRNA synthetase family. AsnA subfamily.

Its subcellular location is the cytoplasm. The catalysed reaction is L-aspartate + NH4(+) + ATP = L-asparagine + AMP + diphosphate + H(+). The protein operates within amino-acid biosynthesis; L-asparagine biosynthesis; L-asparagine from L-aspartate (ammonia route): step 1/1. The polypeptide is Aspartate--ammonia ligase (Pectobacterium carotovorum subsp. carotovorum (strain PC1)).